The following is a 476-amino-acid chain: Protein transport protein Sec61 subunit alpha (476 aa).

At 2-33 the chain is on the cytoplasmic side; the sequence is GIKFLEVIKPFCAVLPEIQKPERKIQFREKVL. The helical transmembrane segment at 34 to 53 threads the bilayer; the sequence is WTAITLFIFLVCCQIPLFGI. Over 54–76 the chain is Lumenal; that stretch reads MSSDSADPFYWMRVILASNRGTL. Residues 77–96 traverse the membrane as a helical segment; sequence MELGISPIVTSGLIMQLLAG. Residues 97–117 are Cytoplasmic-facing; the sequence is AKIIEVGDTPKDRALFNGAQK. The chain crosses the membrane as a helical span at residues 118–138; it reads LFGMIITIGQAIVYVMTGMYG. At 139-144 the chain is on the lumenal side; the sequence is DPSEMG. Residues 145-165 traverse the membrane as a helical segment; the sequence is AGICLLIIIQLFVAGLIVLLL. Topologically, residues 166-172 are cytoplasmic; sequence DELLQKG. A helical transmembrane segment spans residues 173–193; it reads YGLGSGISLFIATNICETIVW. Topologically, residues 194–240 are lumenal; sequence KAFSPTTVNTGRGTEFEGAIIALFHLLATRTDKVRALREAFYRQNLP. The chain crosses the membrane as a helical span at residues 241-261; it reads NILNLIATVFVFAVVIYFQGF. The Cytoplasmic segment spans residues 262–288; it reads RVDLPIKSARYRGQYNTYPIKLFYTSN. Residues 289-309 traverse the membrane as a helical segment; it reads IPIILQSALVSNLYVISQMLS. The Lumenal portion of the chain corresponds to 310–354; sequence TRFSGNFLVNLLGTWSDATSGGPARAYPVAGLCYYLSPPESFGSV. A helical transmembrane segment spans residues 355–375; the sequence is LDDPVHAAIYIVFMLGSCAFF. Over 376-420 the chain is Cytoplasmic; sequence SKTWIEVSGSSAKDVAKQLKEQQMVMRGHRETSMVHELNRYIPTA. The helical transmembrane segment at 421–441 threads the bilayer; the sequence is AAFGGLCIGGLSVMADFLGAI. Topologically, residues 442-445 are lumenal; it reads GSGT. Residues 446 to 462 traverse the membrane as a helical segment; it reads GILLAVTIIYQYFEIFV. Over 463–476 the chain is Cytoplasmic; it reads KEQSEMGSMGALLF.

Belongs to the SecY/SEC61-alpha family. As to quaternary structure, the SEC61 channel-forming translocon complex consists of channel-forming core components SEC61A1, SEC61B and SEC61G and different auxiliary components such as SEC62 and SEC63. The SEC61 channel associates with the multi-pass translocon (MPT) complex.

The protein resides in the endoplasmic reticulum membrane. Its function is as follows. Component of SEC61 channel-forming translocon complex that mediates transport of signal peptide-containing precursor polypeptides across the endoplasmic reticulum (ER). Forms a ribosome receptor and a gated pore in the ER membrane, both functions required for cotranslational translocation of nascent polypeptides. May cooperate with auxiliary protein SEC62, SEC63 and HSPA5/BiP to enable post-translational transport of small presecretory proteins. The SEC61 channel is also involved in ER membrane insertion of transmembrane proteins: it mediates membrane insertion of the first few transmembrane segments of proteins, while insertion of subsequent transmembrane regions of multi-pass membrane proteins is mediated by the multi-pass translocon (MPT) complex. The chain is Protein transport protein Sec61 subunit alpha (sec61a) from Dissostichus mawsoni (Antarctic cod).